The following is a 219-amino-acid chain: Histone H1.4 (219 aa).

The span at 1 to 15 (MSETAPAAPAAPAPA) shows a compositional bias: low complexity. The tract at residues 1–41 (MSETAPAAPAAPAPAEKTPVKKKARKSAGAAKRKASGPPVS) is disordered. Position 2 is an N-acetylserine (Ser2). Phosphoserine is present on Ser2. Lys17 carries the post-translational modification N6-acetyllysine. Residue Thr18 is modified to Phosphothreonine. Residues 20-35 (VKKKARKSAGAAKRKA) are compositionally biased toward basic residues. At Lys26 the chain carries N6-acetyllysine; alternate. The residue at position 26 (Lys26) is an N6-methyllysine; alternate. Residue Lys34 is modified to N6-(beta-hydroxybutyryl)lysine; alternate. Residue Lys34 is modified to N6-succinyllysine; alternate. Ser36 is modified (phosphoserine). Positions 36–109 (SGPPVSELIT…GASGSFKLNK (74 aa)) constitute an H15 domain. Lys52 carries the post-translational modification N6-(beta-hydroxybutyryl)lysine. Residue Arg54 is modified to Citrulline. Lys64, Lys85, Lys90, and Lys106 each carry N6-(beta-hydroxybutyryl)lysine. Residues 92-219 (TLVQTKGTGA…KPKKAAAKKK (128 aa)) form a disordered region. Positions 119–140 (KAKKAGAAKAKKPAGAAKKPKK) are enriched in basic residues. A Phosphothreonine modification is found at Thr146. 2 stretches are compositionally biased toward basic residues: residues 149–160 (KSAKKTPKKAKK) and 168–185 (KKAKSPKKAKAAKPKKAP). Ser150 carries the ADP-ribosylserine modification. Ser187 carries the phosphoserine modification. Positions 192-219 (KAVKPKAAKPKTAKPKAAKPKKAAAKKK) are enriched in basic residues.

Belongs to the histone H1/H5 family. Post-translationally, H1 histones are progressively phosphorylated during the cell cycle, becoming maximally phosphorylated during late G2 phase and M phase, and being dephosphorylated sharply thereafter. In terms of processing, acetylated at Lys-26. Deacetylated at Lys-26 by SIRT1. Citrullination at Arg-54 (H1R54ci) by PADI4 takes place within the DNA-binding site of H1 and results in its displacement from chromatin and global chromatin decondensation, thereby promoting pluripotency and stem cell maintenance. Post-translationally, ADP-ribosylated on Ser-150 in response to DNA damage.

The protein localises to the nucleus. Its subcellular location is the chromosome. Histone H1 protein binds to linker DNA between nucleosomes forming the macromolecular structure known as the chromatin fiber. Histones H1 are necessary for the condensation of nucleosome chains into higher-order structured fibers. Also acts as a regulator of individual gene transcription through chromatin remodeling, nucleosome spacing and DNA methylation. The polypeptide is Histone H1.4 (Homo sapiens (Human)).